Here is a 253-residue protein sequence, read N- to C-terminus: Sulfate transporter CysZ (253 aa).

The next 4 membrane-spanning stretches (helical) occupy residues 31–51 (FVIL…WWLF), 75–95 (LLWP…FSTI), 151–171 (IVLL…PVLW), and 222–242 (IPLL…AMWV).

The protein belongs to the CysZ family.

The protein localises to the cell inner membrane. Functionally, high affinity, high specificity proton-dependent sulfate transporter, which mediates sulfate uptake. Provides the sulfur source for the cysteine synthesis pathway. The sequence is that of Sulfate transporter CysZ from Shigella flexneri.